The sequence spans 711 residues: Probable cyclic nucleotide-gated ion channel 10 (711 aa).

Over methionine 1–lysine 81 the chain is Cytoplasmic. Residues isoleucine 82–isoleucine 102 form a helical membrane-spanning segment. Topologically, residues valine 103 to leucine 116 are extracellular. Residues glutamate 117–phenylalanine 137 traverse the membrane as a helical segment. Residues glutamine 138–serine 170 are Cytoplasmic-facing. The chain crosses the membrane as a helical span at residues tyrosine 171–isoleucine 191. At proline 192–aspartate 204 the chain is on the extracellular side. The chain crosses the membrane as a helical span at residues tyrosine 205–tyrosine 225. Residues threonine 226–alanine 243 lie on the Cytoplasmic side of the membrane. A helical transmembrane segment spans residues alanine 244 to isoleucine 264. The Extracellular segment spans residues serine 265–valine 366. The chain crosses the membrane as a helical span at residues glycine 367–isoleucine 387. At glycine 388 to proline 711 the chain is on the cytoplasmic side. A nucleoside 3',5'-cyclic phosphate-binding positions include leucine 473–phenylalanine 603 and glutamate 544. Positions phenylalanine 589–tyrosine 604 are calmodulin-binding. The 30-residue stretch at arginine 609–arginine 638 folds into the IQ domain. A disordered region spans residues tyrosine 689 to proline 711.

Belongs to the cyclic nucleotide-gated cation channel (TC 1.A.1.5) family. Homotetramer or heterotetramer.

The protein localises to the cell membrane. Functionally, probable cyclic nucleotide-gated ion channel. The chain is Probable cyclic nucleotide-gated ion channel 10 (CNGC10) from Arabidopsis thaliana (Mouse-ear cress).